The sequence spans 413 residues: Protein MANNAN SYNTHESIS-RELATED (413 aa).

Over 1–5 (MNSME) the chain is Cytoplasmic. The chain crosses the membrane as a helical; Signal-anchor for type II membrane protein span at residues 6–26 (IRQAFAGLLTLSMFIMLGNMI). Topologically, residues 27–413 (KKDHFDYPAE…KNHLAYKCFC (387 aa)) are lumenal. N-linked (GlcNAc...) asparagine glycosylation is present at Asn-207. Residue 255–257 (DLR) coordinates substrate.

It belongs to the glycosyltransferase GT106 family. Highly and specifically expressed in the endosperm.

It localises to the golgi apparatus membrane. It participates in glycan biosynthesis. In terms of biological role, glycosyltransferase involved in mannan biosynthesis. In Trigonella foenum-graecum (Fenugreek), this protein is Protein MANNAN SYNTHESIS-RELATED.